Here is a 270-residue protein sequence, read N- to C-terminus: Interleukin-1 alpha (270 aa).

Residues 1–114 (MAKVPDLFED…HDLEETIQPR (114 aa)) constitute a propeptide that is removed on maturation. An N-linked (GlcNAc...) asparagine glycan is attached at Asn64. Position 85 is an N6-acetyllysine (Lys85). Positions 85 to 89 (KKRRL) are nuclear localization signal (NLS). Ser90 carries the phosphoserine modification. Residues Asn139 and Asn143 are each glycosylated (N-linked (GlcNAc...) asparagine).

This sequence belongs to the IL-1 family. Monomer. Interacts with TMED10; the interaction mediates the translocation from the cytoplasm into the ERGIC (endoplasmic reticulum-Golgi intermediate compartment) and thereby secretion. Interacts with IL1R1. Interacts with S100A13; this interaction is the first step in the export of IL1A, followed by direct translocation of this complex across the plasma membrane. Acetylated within its nuclear localization sequence, which impacts subcellular localization. In terms of processing, proteolytic processed by CAPN1 in a calcium-dependent manner. Cleavage from 31 kDa precursor to 18 kDa biologically active molecules. Post-translationally, phosphorylated. Phosphorylation greatly enhances susceptibility to digestion and promotes the conversion of pre-IL1A alpha to the biologically active IL1A.

It is found in the nucleus. It localises to the cytoplasm. The protein localises to the secreted. Functionally, cytokine constitutively present intracellularly in nearly all resting non-hematopoietic cells that plays an important role in inflammation and bridges the innate and adaptive immune systems. After binding to its receptor IL1R1 together with its accessory protein IL1RAP, forms the high affinity interleukin-1 receptor complex. Signaling involves the recruitment of adapter molecules such as MYD88, IRAK1 or IRAK4. In turn, mediates the activation of NF-kappa-B and the three MAPK pathways p38, p42/p44 and JNK pathways. Within the cell, acts as an alarmin and cell death results in its liberation in the extracellular space after disruption of the cell membrane to induce inflammation and alert the host to injury or damage. In addition to its role as a danger signal, which occurs when the cytokine is passively released by cell necrosis, directly senses DNA damage and acts as a signal for genotoxic stress without loss of cell integrity. The polypeptide is Interleukin-1 alpha (Mus musculus (Mouse)).